A 557-amino-acid polypeptide reads, in one-letter code: GMP synthase [glutamine-hydrolyzing] (557 aa).

One can recognise a Glutamine amidotransferase type-1 domain in the interval 13 to 209; the sequence is TILTLDFGSQ…AVDICGANPN (197 aa). Cysteine 89 (nucleophile) is an active-site residue. Catalysis depends on residues histidine 183 and glutamate 185. A GMPS ATP-PPase domain is found at 210-414; that stretch reads WTMSKFVDQE…LGIAHELVMR (205 aa). 238-244 contacts ATP; sequence SGGVDST. Residues arginine 311, aspartate 476, lysine 549, and glutamate 555 each contribute to the XMP site.

As to quaternary structure, homodimer. It depends on Mg(2+) as a cofactor.

It localises to the cytoplasm. It is found in the cytosol. It carries out the reaction XMP + L-glutamine + ATP + H2O = GMP + L-glutamate + AMP + diphosphate + 2 H(+). It participates in purine metabolism; GMP biosynthesis; GMP from XMP (L-Gln route): step 1/1. Its activity is regulated as follows. Inhibited by 6-diazo-5-oxo-l-norleucine (DON) and acivicin (ACI). Catalyzes the conversion of xanthine monophosphate (XMP) to GMP in the presence of glutamine and ATP through an adenyl-XMP intermediate. The protein is GMP synthase [glutamine-hydrolyzing] (gua1) of Aspergillus fumigatus (strain ATCC MYA-4609 / CBS 101355 / FGSC A1100 / Af293) (Neosartorya fumigata).